A 318-amino-acid polypeptide reads, in one-letter code: Acetyl-coenzyme A carboxylase carboxyl transferase subunit alpha (318 aa).

The region spanning 32-293 (NINEEIQRLE…REALREEWAR (262 aa)) is the CoA carboxyltransferase C-terminal domain.

This sequence belongs to the AccA family. Acetyl-CoA carboxylase is a heterohexamer composed of biotin carboxyl carrier protein (AccB), biotin carboxylase (AccC) and two subunits each of ACCase subunit alpha (AccA) and ACCase subunit beta (AccD).

Its subcellular location is the cytoplasm. The catalysed reaction is N(6)-carboxybiotinyl-L-lysyl-[protein] + acetyl-CoA = N(6)-biotinyl-L-lysyl-[protein] + malonyl-CoA. It participates in lipid metabolism; malonyl-CoA biosynthesis; malonyl-CoA from acetyl-CoA: step 1/1. Component of the acetyl coenzyme A carboxylase (ACC) complex. First, biotin carboxylase catalyzes the carboxylation of biotin on its carrier protein (BCCP) and then the CO(2) group is transferred by the carboxyltransferase to acetyl-CoA to form malonyl-CoA. The protein is Acetyl-coenzyme A carboxylase carboxyl transferase subunit alpha of Halorhodospira halophila (strain DSM 244 / SL1) (Ectothiorhodospira halophila (strain DSM 244 / SL1)).